The chain runs to 406 residues: Imidazolonepropionase (406 aa).

Fe(3+) contacts are provided by histidine 65 and histidine 67. Zn(2+)-binding residues include histidine 65 and histidine 67. Arginine 74, tyrosine 137, and histidine 170 together coordinate 4-imidazolone-5-propanoate. Tyrosine 137 contacts N-formimidoyl-L-glutamate. Fe(3+) is bound at residue histidine 235. Histidine 235 contributes to the Zn(2+) binding site. Glutamine 238 contributes to the 4-imidazolone-5-propanoate binding site. Aspartate 310 is a Fe(3+) binding site. Aspartate 310 contributes to the Zn(2+) binding site. N-formimidoyl-L-glutamate-binding residues include asparagine 312 and glycine 314. Position 315 (threonine 315) interacts with 4-imidazolone-5-propanoate.

The protein belongs to the metallo-dependent hydrolases superfamily. HutI family. It depends on Zn(2+) as a cofactor. Fe(3+) is required as a cofactor.

It is found in the cytoplasm. The enzyme catalyses 4-imidazolone-5-propanoate + H2O = N-formimidoyl-L-glutamate. It participates in amino-acid degradation; L-histidine degradation into L-glutamate; N-formimidoyl-L-glutamate from L-histidine: step 3/3. Its function is as follows. Catalyzes the hydrolytic cleavage of the carbon-nitrogen bond in imidazolone-5-propanoate to yield N-formimidoyl-L-glutamate. It is the third step in the universal histidine degradation pathway. The polypeptide is Imidazolonepropionase (Vibrio vulnificus (strain YJ016)).